The following is a 258-amino-acid chain: Fibroblast growth factor-binding protein 3 (258 aa).

Residues 1–26 (MTPPKLRASLSPSLLLLLSGCLLAAA) form the signal peptide. Disulfide bonds link Cys59–Cys80 and Cys90–Cys124. Residues 146–231 (RLVPRASPPA…GTGPDPDGLD (86 aa)) form a disordered region. The segment covering 186-197 (GTPPPQSAPPKE) has biased composition (pro residues). Positions 198-209 (NPSERKTNEGKR) are enriched in basic and acidic residues. The cysteines at positions 241 and 249 are disulfide-linked.

The protein belongs to the fibroblast growth factor-binding protein family. In terms of assembly, interacts with FGF2.

Its subcellular location is the secreted. In terms of biological role, heparin-binding protein which binds to FGF2, prevents binding of FGF2 to heparin and probably inhibits immobilization of FGF2 on extracellular matrix glycosaminoglycans, allowing its release and subsequent activation of FGFR signaling which leads to increased vascular permeability. The polypeptide is Fibroblast growth factor-binding protein 3 (FGFBP3) (Homo sapiens (Human)).